Here is a 445-residue protein sequence, read N- to C-terminus: Probable glycine dehydrogenase (decarboxylating) subunit 1 (445 aa).

This sequence belongs to the GcvP family. N-terminal subunit subfamily. In terms of assembly, the glycine cleavage system is composed of four proteins: P, T, L and H. In this organism, the P 'protein' is a heterodimer of two subunits.

It catalyses the reaction N(6)-[(R)-lipoyl]-L-lysyl-[glycine-cleavage complex H protein] + glycine + H(+) = N(6)-[(R)-S(8)-aminomethyldihydrolipoyl]-L-lysyl-[glycine-cleavage complex H protein] + CO2. Its function is as follows. The glycine cleavage system catalyzes the degradation of glycine. The P protein binds the alpha-amino group of glycine through its pyridoxal phosphate cofactor; CO(2) is released and the remaining methylamine moiety is then transferred to the lipoamide cofactor of the H protein. In Citrifermentans bemidjiense (strain ATCC BAA-1014 / DSM 16622 / JCM 12645 / Bem) (Geobacter bemidjiensis), this protein is Probable glycine dehydrogenase (decarboxylating) subunit 1.